Reading from the N-terminus, the 289-residue chain is Inorganic pyrophosphatase (289 aa).

Residue S2 is modified to N-acetylserine. At K57 the chain carries N6-acetyllysine. Mg(2+) contacts are provided by D116, D121, and D153. S250 is modified (phosphoserine).

It belongs to the PPase family. As to quaternary structure, homodimer. Mg(2+) serves as cofactor. The N-terminus is blocked. Highest levels are found in retinal rod outer segments.

The protein localises to the cytoplasm. It carries out the reaction diphosphate + H2O = 2 phosphate + H(+). This is Inorganic pyrophosphatase (PPA1) from Bos taurus (Bovine).